Consider the following 459-residue polypeptide: Protoheme IX farnesyltransferase (459 aa).

The segment at 1 to 184 (MSRNTATQFV…AYVQLMKPRL (184 aa)) is unknown. 12 helical membrane passes run 9–29 (FVAV…LGAT), 66–86 (AAAL…RTGA), 93–113 (AVTL…YTAM), 123–143 (VHLT…AWTL), 184–204 (LMWL…SQLG), 211–231 (AATV…SGTF), 262–282 (LAFG…VNLL), 284–304 (AVLG…VLKP), 325–345 (WVAV…VIFL), 382–402 (HIVY…ELTG), 403–423 (LGPL…YFAI), and 438–458 (FHAS…DTMV). Positions 185-459 (MWLLCLVAGA…VAVVLDTMVV (275 aa)) are protoheme IX prenyltransferase.

The protein in the C-terminal section; belongs to the UbiA prenyltransferase family. Protoheme IX farnesyltransferase subfamily.

It is found in the cell membrane. It catalyses the reaction heme b + (2E,6E)-farnesyl diphosphate + H2O = Fe(II)-heme o + diphosphate. It functions in the pathway porphyrin-containing compound metabolism; heme O biosynthesis; heme O from protoheme: step 1/1. Functionally, converts heme B (protoheme IX) to heme O by substitution of the vinyl group on carbon 2 of heme B porphyrin ring with a hydroxyethyl farnesyl side group. The polypeptide is Protoheme IX farnesyltransferase (ctaB) (Halobacterium salinarum (strain ATCC 29341 / DSM 671 / R1)).